A 487-amino-acid chain; its full sequence is Protein translocase subunit SecY (487 aa).

Over 1–20 (MSWKDTAEPLLVRMPAVQRP) the chain is Cytoplasmic. A helical membrane pass occupies residues 21–47 (EGHVPFKRKLTWTGGVLLLYFFLTNVK). Over 48-59 (LFGLDIDASQQV) the chain is Extracellular. The segment at residues 60 to 67 (FGRFSSIL) is an intramembrane region (helical). A discontinuously helical membrane pass occupies residues 60 to 88 (FGRFSSILASGQGSIMQLGIGPIVTASIV). The stretch at 68 to 79 (ASGQGSIMQLGI) is an intramembrane region. The helical intramembrane region spans 80-88 (GPIVTASIV). The Cytoplasmic segment spans residues 89 to 110 (LQLLGGADLLGLNTQDDPRDQI). The helical transmembrane segment at 111–135 (LYQGLQKLLVLVMICLTGLPMVFAG) threads the bilayer. The Extracellular portion of the chain corresponds to 136-153 (GFLPADTAVANSLGIGTA). A helical transmembrane segment spans residues 154-178 (GVQWLIFAQMFVGGVLILFMDEVIS). At 179 to 184 (KWGVGS) the chain is on the cytoplasmic side. A helical transmembrane segment spans residues 185 to 203 (GIGLFIVAGVSQRLVGGLL). Over 204–244 (TAPFLGNSEGIIYTWYLFITGERGTGPVLAADGLQTVLLQG) the chain is Extracellular. A helical membrane pass occupies residues 245 to 266 (ELLGLFTTVLIFAVVVYAESVR). Residues 267–291 (VEIPLSNARVKGARGRFPVKLIYAS) are Cytoplasmic-facing. A helical membrane pass occupies residues 292-313 (VLPMILVRALQANIQFLGRILN). At 314–364 (AQLGSMPAFLGTYANGQPTGGLFYFLAPIQSRGDWMWWLEGTAQPVWQILT) the chain is on the extracellular side. Residues 365 to 384 (RVGIDLFVMLVGGAVFAVFW) traverse the membrane as a helical segment. Over 385-427 (VETTDMGPEATAKQIHNSGMQIPGFRQNVGVIEKVLERYIPQV) the chain is Cytoplasmic. The helical transmembrane segment at 428 to 446 (TVIGGALVGLLAVMANMLG) threads the bilayer. Residues 447-451 (TIGGV) are Extracellular-facing. The helical transmembrane segment at 452–466 (SGTGLLLTVSITYKL) threads the bilayer. Residues 467 to 487 (YEEIAEEQLMEMHPMMRQMFG) lie on the Cytoplasmic side of the membrane.

It belongs to the SecY/SEC61-alpha family. Component of the Sec protein translocase complex. Heterotrimer consisting of alpha (SecY), beta (SecG) and gamma (SecE) subunits. The heterotrimers can form oligomers, although 1 heterotrimer is thought to be able to translocate proteins. Interacts with the ribosome. May interact with SecDF, and other proteins may be involved.

It localises to the cell membrane. The central subunit of the protein translocation channel SecYEG. Consists of two halves formed by TMs 1-5 and 6-10. These two domains form a lateral gate at the front which open onto the bilayer between TMs 2 and 7, and are clamped together by SecE at the back. The channel is closed by both a pore ring composed of hydrophobic SecY resides and a short helix (helix 2A) on the extracellular side of the membrane which forms a plug. The plug probably moves laterally to allow the channel to open. The ring and the pore may move independently. This is Protein translocase subunit SecY from Haloarcula marismortui (strain ATCC 43049 / DSM 3752 / JCM 8966 / VKM B-1809) (Halobacterium marismortui).